The chain runs to 303 residues: Movement protein (303 aa).

This sequence belongs to the tobamovirus movement protein family.

Its subcellular location is the host cytoplasm. It is found in the host cytoskeleton. The protein localises to the host cell junction. It localises to the host plasmodesma. Its function is as follows. Transports viral genome to neighboring plant cells directly through plasmosdesmata, without any budding. The movement protein allows efficient cell to cell propagation, by bypassing the host cell wall barrier. Forms a ribonucleoprotein complex with viral RNA. Binds microtubules and modulates microtubule stability. Can bind double-stranded DNA. This Odontoglossum ringspot virus (isolate Korean Cy) (ORSV-Cy) protein is Movement protein (MP).